We begin with the raw amino-acid sequence, 140 residues long: Pro-variola growth factor (140 aa).

The signal sequence occupies residues 1 to 18 (MSMKYLMLLFAAMIIRSF). Residues 19 to 100 (ANSGNAIETT…SEKPNTTTSY (82 aa)) are Extracellular-facing. Residue Asn-34 is glycosylated (N-linked (GlcNAc...) asparagine; by host). Positions 41–81 (AIRLCGPEGNGYCFHGICIHARDIDGMYCRCSHGYTGIRCQ) constitute an EGF-like domain. Cystine bridges form between Cys-45–Cys-58, Cys-53–Cys-69, and Cys-71–Cys-80. Residue Asn-95 is glycosylated (N-linked (GlcNAc...) asparagine; by host). A helical membrane pass occupies residues 101–121 (IPSPGIVLVLLVSIIMCCLLF). The Cytoplasmic segment spans residues 122 to 140 (VYRFTRRTNKLPLQDMVVP).

Belongs to the orthopoxvirus OPG019 family. As to quaternary structure, variola growth factor interacts with host EGFR and promotes EGFR dimerization.

The protein localises to the host membrane. The protein resides in the secreted. Stimulates cellular proliferation (hyperplasia)and mobility around infected cells to promote rapid and efficient spread of infection. This effect is beneficial for virus replication in vivo, because poxviruses replicate possibly better in proliferating cells than in quiescent cells. Acts by binding host EGFR, inducing its dimerization, autophosphorylation and leading to activation of several cellular pathways regulating cell proliferation or cell survival. The activation by host EGFR of mitogen activated protein kinases (MAPK) and extracellular-signal regulated kinases (ERK) are essential for the positive effect of vaccinia growth factor on poxvirus virulence in vivo. The protein is Pro-variola growth factor (OPG019) of Variola virus.